Here is a 355-residue protein sequence, read N- to C-terminus: Replication-associated protein (355 aa).

Positions 11 to 114 (SHRNANTFLT…PLAVFERGTF (104 aa)) constitute a CRESS-DNA virus Rep endonuclease domain. An RCR-1 motif is present at residues 18–21 (FLTY). A divalent metal cation-binding residues include Glu-52, His-60, and His-62. The RCR-2 signature appears at 60 to 62 (HLH). Tyr-100 serves as the catalytic For DNA cleavage activity. Positions 100–103 (YILK) match the RCR-3 motif. Glu-104 is a binding site for a divalent metal cation. Positions 175 to 187 (SANKLFPEIQEEF) are oligomerization. 229 to 236 (GPTRTGKS) serves as a coordination point for ATP. The segment at 252-270 (VDWSSYNEDAIYNIVDDIP) is transactivation. Positions 292–303 (KYGKKKKVQKKS) match the Nuclear localization signal motif.

Belongs to the geminiviridae Rep protein family. As to quaternary structure, homooligomer. Rep binds to repeated DNA motifs (iterons). Forms the O-complex, which is a Rep-DNA complex involved in the initiation of RCR. Part of the C- and V-complexes which are RepA-Rep-DNA complexes involved in the c-sense and v-sense transcription. It depends on Mg(2+) as a cofactor. Mn(2+) serves as cofactor.

It localises to the host nucleus. Essential for the replication of viral ssDNA. The closed circular ssDNA genome is first converted to a superhelical dsDNA. Rep binds a specific region at the genome origin of replication. It introduces an endonucleolytic nick within the conserved sequence 5'-TAATATTAC-3' in the intergenic region of the genome present in all geminiviruses, thereby initiating the rolling circle replication (RCR). Following cleavage, binds covalently to the 5'-phosphate of DNA as a tyrosyl ester. The cleavage gives rise to a free 3'-OH that serves as a primer for the cellular DNA polymerase. The polymerase synthesizes the (+) strand DNA by rolling circle mechanism. After one round of replication, a Rep-catalyzed nucleotidyl transfer reaction releases a circular single-stranded virus genome, thereby terminating the replication. Displays origin-specific DNA cleavage, nucleotidyl transferase, ATPase and helicase activities. Acts as an inhibitor of C-sense gene transcription. This chain is Replication-associated protein, found in Maize streak virus genotype A (isolate South Africa) (MSV).